Consider the following 477-residue polypeptide: Glycogen synthase (477 aa).

Lys-15 provides a ligand contact to ADP-alpha-D-glucose.

It belongs to the glycosyltransferase 1 family. Bacterial/plant glycogen synthase subfamily.

It catalyses the reaction [(1-&gt;4)-alpha-D-glucosyl](n) + ADP-alpha-D-glucose = [(1-&gt;4)-alpha-D-glucosyl](n+1) + ADP + H(+). It participates in glycan biosynthesis; glycogen biosynthesis. In terms of biological role, synthesizes alpha-1,4-glucan chains using ADP-glucose. The sequence is that of Glycogen synthase from Streptococcus pneumoniae (strain 70585).